The chain runs to 508 residues: MALKLMIQGTASSVGKSLIVTALCRIFKQDGLKVAPFKSQNMALNSYITEEGLEIGRAQAVQAEAAGIKPSYHMNPILLKPSSDKKSQVVLRGRVYENMSAEEYFKFRPKLLELIKEDFDFLAKRNDVVVIEGAGSPAEINLKEKDIVNMGLAELVNAPVLLVGDIDRGGVFASIAGTMLLLDEKERNRVEGVIINKFRGDIEILKPGLKMLENIIQKEVLGVIPYMDVHIDEEDGATDRFYTKCAQGEVDVAIINLPHISNFTDFDPLTKVPGVKIKYVNKGERIGDCDVLIIPGTKNTIGDLKVLKDYGLDKEILNLREKGKFIVGICGGFQMLGKVIKDPYHIESDTEEMEGLGLLSIETVIEREKTTSETKAFLGEELPDTLSSLKGLFVTGYEIHMGESYILGKGKHFSIVVERNKEKVKVLDGAVSEDGRVFGTYIHGIFENSLFTKEFINIVRKEKGLTPLEEVINYREFREKEYDRLANIVRNSLDMERIYQIMERYRDK.

In terms of domain architecture, GATase cobBQ-type spans 249–451 (EVDVAIINLP…IHGIFENSLF (203 aa)). Cys330 functions as the Nucleophile in the catalytic mechanism. His443 is an active-site residue.

It belongs to the CobB/CobQ family. CobQ subfamily.

The protein operates within cofactor biosynthesis; adenosylcobalamin biosynthesis. Functionally, catalyzes amidations at positions B, D, E, and G on adenosylcobyrinic A,C-diamide. NH(2) groups are provided by glutamine, and one molecule of ATP is hydrogenolyzed for each amidation. This is Cobyric acid synthase from Caldanaerobacter subterraneus subsp. tengcongensis (strain DSM 15242 / JCM 11007 / NBRC 100824 / MB4) (Thermoanaerobacter tengcongensis).